The following is a 158-amino-acid chain: GTP-dependent dephospho-CoA kinase (158 aa).

The GTP site is built by Asp-35, Val-36, Asp-54, Lys-56, Glu-109, and Asp-132.

It belongs to the GTP-dependent DPCK family.

It carries out the reaction 3'-dephospho-CoA + GTP = GDP + CoA + H(+). It participates in cofactor biosynthesis; coenzyme A biosynthesis. Catalyzes the GTP-dependent phosphorylation of the 3'-hydroxyl group of dephosphocoenzyme A to form coenzyme A (CoA). This Methanococcus vannielii (strain ATCC 35089 / DSM 1224 / JCM 13029 / OCM 148 / SB) protein is GTP-dependent dephospho-CoA kinase.